A 192-amino-acid chain; its full sequence is Ion-translocating oxidoreductase complex subunit A (192 aa).

6 helical membrane passes run 5-25 (VLLLVGTVLVNNFVLVKFLGL), 39-59 (IGMGLATTFVLTLASVCAYLV), 67-87 (LGIEYLRTMSFILVIAVVVQF), 102-122 (LLGIFLPLITTNCAVLGVALL), 134-154 (IIYGFGAAVGFSLVLILFASM), and 171-191 (SIAMITAGLMSLAFMGFTGLV).

This sequence belongs to the NqrDE/RnfAE family. In terms of assembly, the complex is composed of six subunits: RnfA, RnfB, RnfC, RnfD, RnfE and RnfG.

It is found in the cell inner membrane. Its function is as follows. Part of a membrane-bound complex that couples electron transfer with translocation of ions across the membrane. This chain is Ion-translocating oxidoreductase complex subunit A, found in Vibrio parahaemolyticus serotype O3:K6 (strain RIMD 2210633).